The following is a 280-amino-acid chain: 2-dehydro-3-deoxyphosphooctonate aldolase (280 aa).

The protein belongs to the KdsA family.

It is found in the cytoplasm. It catalyses the reaction D-arabinose 5-phosphate + phosphoenolpyruvate + H2O = 3-deoxy-alpha-D-manno-2-octulosonate-8-phosphate + phosphate. The protein operates within carbohydrate biosynthesis; 3-deoxy-D-manno-octulosonate biosynthesis; 3-deoxy-D-manno-octulosonate from D-ribulose 5-phosphate: step 2/3. Its pathway is bacterial outer membrane biogenesis; lipopolysaccharide biosynthesis. The chain is 2-dehydro-3-deoxyphosphooctonate aldolase from Colwellia psychrerythraea (strain 34H / ATCC BAA-681) (Vibrio psychroerythus).